A 131-amino-acid polypeptide reads, in one-letter code: Ponticulin-like protein M (131 aa).

An N-terminal signal peptide occupies residues 1 to 19 (MKFLSTLILLLSVLALVRG). A lipid anchor (GPI-like-anchor amidated serine) is attached at Ser106. Positions 107–131 (NSASSPLTTAVLFVVAFAAAIALLL) are cleaved as a propeptide — removed in mature form.

It belongs to the ponticulin family. The GPI-like-anchor contains a phosphoceramide group, rather than a phosphatidyl group.

It localises to the cell membrane. Functionally, binds F-actin and nucleates actin assembly. The chain is Ponticulin-like protein M (ponM) from Dictyostelium discoideum (Social amoeba).